The chain runs to 114 residues: Large ribosomal subunit protein uL18 (114 aa).

Belongs to the universal ribosomal protein uL18 family. In terms of assembly, part of the 50S ribosomal subunit; part of the 5S rRNA/L5/L18/L25 subcomplex. Contacts the 5S and 23S rRNAs.

Functionally, this is one of the proteins that bind and probably mediate the attachment of the 5S RNA into the large ribosomal subunit, where it forms part of the central protuberance. This is Large ribosomal subunit protein uL18 from Aster yellows phytoplasma.